The chain runs to 290 residues: Nucleotide-binding protein BAV3158 (290 aa).

Position 9 to 16 (9 to 16 (GISGSGKS)) interacts with ATP. Residue 58-61 (DVRS) coordinates GTP.

It belongs to the RapZ-like family.

Functionally, displays ATPase and GTPase activities. The sequence is that of Nucleotide-binding protein BAV3158 from Bordetella avium (strain 197N).